A 190-amino-acid chain; its full sequence is Xanthine phosphoribosyltransferase 2 (190 aa).

Residues Leu20 and Asn27 each coordinate xanthine. A 5-phospho-alpha-D-ribose 1-diphosphate-binding site is contributed by 129-133; that stretch reads ANGCA. Lys157 provides a ligand contact to xanthine.

This sequence belongs to the purine/pyrimidine phosphoribosyltransferase family. Xpt subfamily. Homodimer.

Its subcellular location is the cytoplasm. It catalyses the reaction XMP + diphosphate = xanthine + 5-phospho-alpha-D-ribose 1-diphosphate. It functions in the pathway purine metabolism; XMP biosynthesis via salvage pathway; XMP from xanthine: step 1/1. Its function is as follows. Converts the preformed base xanthine, a product of nucleic acid breakdown, to xanthosine 5'-monophosphate (XMP), so it can be reused for RNA or DNA synthesis. The protein is Xanthine phosphoribosyltransferase 2 of Clostridium botulinum (strain Langeland / NCTC 10281 / Type F).